A 397-amino-acid chain; its full sequence is FAD-dependent monooxygenase trt8 (397 aa).

Tyr-53 is an active-site residue. Residues Asp-145 and Ala-158 each coordinate FAD.

This sequence belongs to the paxM FAD-dependent monooxygenase family. FAD serves as cofactor.

It functions in the pathway secondary metabolite biosynthesis; terpenoid biosynthesis. FAD-dependent monooxygenase; part of the gene cluster that mediates the biosynthesis of terretonin, a fungal meroterpenoid that acts as a mycotoxin. The first step of the pathway is the synthesis of 3,5-dimethylorsellinic acid (DMOA) by the polyketide synthase trt4. DMOA is then prenylated into farnesyl-DMOA by the polyprenyl transferase trt2. Methylation by the methyltransferase trt5 then leads to farnesyl-DMOA methyl ester which is further subject to epoxidation by the FAD-dependent monooxygenase trt8 to yield epoxyfarnesyl-DMOA methyl ester. Cyclization of epoxyfarnesyl-DMOA methyl ester by the terpene cyclase trt1 leads to a tetracycle intermediate which is in turn converted to preterretonin. Dehydrogenase trt9 comes next to transform preterretonin to preterrenoid. The FAD-dependent monooxygenase trt3 is then required for the C-hydroxylation at C16 of preterrenoid to yield terrenoid. The cytochrome P450 trt6 catalyzes three successive oxidations to transform terrenoid into an unstable intermediate, which then undergoes the D-ring expansion and unusual rearrangement of the methoxy group to afford the core skeleton of terretonin. Trt14 catalyzes the D-ring expansion of terretonin involving intramolecular methoxy rearrangement as well as the hydrolysis of the expanded D-ring and the methyl ester moiety. Finally, the nonheme iron-dependent dioxygenase trt7 accomplishes the last two oxidation reactions steps to complete the biosynthesis of terretonin. Terretonin C is produced via spontaneous decarboxylation of the terretonin precursor. Another shunt product of the terretonin biosynthesis is dihydrofarnesyl-DMOA, derived from epoxyfarnesyl-DMOA through hydrolysis of the epoxide. The protein is FAD-dependent monooxygenase trt8 of Aspergillus terreus (strain NIH 2624 / FGSC A1156).